A 376-amino-acid chain; its full sequence is MSKRDYYEVLGVARGASDEELKKAYRRCAMKYHPDRNPGDAAAEATFKECKEAYEVLSDGNKRRAYDAHGHAAFEHGMGGGGGGPGGPDMGDIFGDIFGNIFGGGAAGPRAARRGADVGYVLELDLEEAVAGIERRIEIPTLIECEPCHGSGSEDGKVEVCATCHGRGQVRIQRGIFAMQQSCPHCDGRGTLIQNPCKTCHGAGRVEEDKVLSIKVPAGVDTGDRIRLAGEGEAGPAGTPPGDLYVEVRVREHAIFQRDGDDLHCEVPIRISQAALGDTVRVATLGGEAEIRIPAETQTGKLFRLRGKGVRSVRSRSEGDLYCRVVVETPVNLTTDQRELLKQFEATFTGEDARKHSPKSATFIDGVKGFWDRMTS.

The J domain maps to 5–70 (DYYEVLGVAR…NKRRAYDAHG (66 aa)). The segment at 132–209 (GIERRIEIPT…CHGAGRVEED (78 aa)) adopts a CR-type zinc-finger fold. Zn(2+) contacts are provided by C145, C148, C161, C164, C183, C186, C197, and C200. CXXCXGXG motif repeat units follow at residues 145 to 152 (CEPCHGSG), 161 to 168 (CATCHGRG), 183 to 190 (CPHCDGRG), and 197 to 204 (CKTCHGAG).

The protein belongs to the DnaJ family. As to quaternary structure, homodimer. Requires Zn(2+) as cofactor.

The protein resides in the cytoplasm. Participates actively in the response to hyperosmotic and heat shock by preventing the aggregation of stress-denatured proteins and by disaggregating proteins, also in an autonomous, DnaK-independent fashion. Unfolded proteins bind initially to DnaJ; upon interaction with the DnaJ-bound protein, DnaK hydrolyzes its bound ATP, resulting in the formation of a stable complex. GrpE releases ADP from DnaK; ATP binding to DnaK triggers the release of the substrate protein, thus completing the reaction cycle. Several rounds of ATP-dependent interactions between DnaJ, DnaK and GrpE are required for fully efficient folding. Also involved, together with DnaK and GrpE, in the DNA replication of plasmids through activation of initiation proteins. This Xanthomonas campestris pv. campestris (strain 8004) protein is Chaperone protein DnaJ.